A 44-amino-acid chain; its full sequence is Photosystem I reaction center subunit IX (44 aa).

The helical transmembrane segment at 7–27 (YLSTAPVLATLWFSSLAGLLI) threads the bilayer.

This sequence belongs to the PsaJ family.

The protein resides in the plastid. It is found in the chloroplast thylakoid membrane. In terms of biological role, may help in the organization of the PsaE and PsaF subunits. This chain is Photosystem I reaction center subunit IX, found in Welwitschia mirabilis (Tree tumbo).